A 293-amino-acid chain; its full sequence is Beta-lactamase (293 aa).

An N-terminal signal peptide occupies residues 1–27 (MRFTATVLSRVATGLALGLSMATASLA). Ser74 serves as the catalytic Acyl-ester intermediate. 238-240 (KSG) lines the substrate pocket.

The protein belongs to the class-A beta-lactamase family.

The protein localises to the periplasm. The catalysed reaction is a beta-lactam + H2O = a substituted beta-amino acid. In terms of biological role, hydrolyzes beta-lactams antibiotics. Rates of hydrolysis relative to benzylpenicillin =100: ampicillin = 27, carbenicillin = 25, cloxacillin = 0, cephaloridine = 4. The sequence is that of Beta-lactamase from Rhodobacter capsulatus (Rhodopseudomonas capsulata).